We begin with the raw amino-acid sequence, 156 residues long: Cyanate hydratase (156 aa).

Catalysis depends on residues Arg96, Glu99, and Ser122.

This sequence belongs to the cyanase family.

The catalysed reaction is cyanate + hydrogencarbonate + 3 H(+) = NH4(+) + 2 CO2. In terms of biological role, catalyzes the reaction of cyanate with bicarbonate to produce ammonia and carbon dioxide. This Pseudomonas paraeruginosa (strain DSM 24068 / PA7) (Pseudomonas aeruginosa (strain PA7)) protein is Cyanate hydratase.